A 339-amino-acid chain; its full sequence is Beta-ketoacyl-[acyl-carrier-protein] synthase III (339 aa).

Catalysis depends on residues C119 and H262. Residues 263 to 267 are ACP-binding; that stretch reads QANQR. Residue N292 is part of the active site.

It belongs to the thiolase-like superfamily. FabH family. Homodimer.

The protein resides in the cytoplasm. It carries out the reaction malonyl-[ACP] + acetyl-CoA + H(+) = 3-oxobutanoyl-[ACP] + CO2 + CoA. It functions in the pathway lipid metabolism; fatty acid biosynthesis. Catalyzes the condensation reaction of fatty acid synthesis by the addition to an acyl acceptor of two carbons from malonyl-ACP. Catalyzes the first condensation reaction which initiates fatty acid synthesis and may therefore play a role in governing the total rate of fatty acid production. Possesses both acetoacetyl-ACP synthase and acetyl transacylase activities. Its substrate specificity determines the biosynthesis of branched-chain and/or straight-chain of fatty acids. This Prochlorococcus marinus (strain MIT 9313) protein is Beta-ketoacyl-[acyl-carrier-protein] synthase III.